A 969-amino-acid polypeptide reads, in one-letter code: RNA polymerase-associated protein RapA (969 aa).

The 178-residue stretch at Glu-162–Asp-339 folds into the Helicase ATP-binding domain. Asp-175–Thr-182 is an ATP binding site. Positions Asp-285–His-288 match the DEAH box motif. The 172-residue stretch at Arg-492 to Gly-663 folds into the Helicase C-terminal domain.

The protein belongs to the SNF2/RAD54 helicase family. RapA subfamily. In terms of assembly, interacts with the RNAP. Has a higher affinity for the core RNAP than for the holoenzyme. Its ATPase activity is stimulated by binding to RNAP.

Transcription regulator that activates transcription by stimulating RNA polymerase (RNAP) recycling in case of stress conditions such as supercoiled DNA or high salt concentrations. Probably acts by releasing the RNAP, when it is trapped or immobilized on tightly supercoiled DNA. Does not activate transcription on linear DNA. Probably not involved in DNA repair. In Actinobacillus pleuropneumoniae serotype 5b (strain L20), this protein is RNA polymerase-associated protein RapA.